Consider the following 421-residue polypeptide: Solute carrier family 35 member F3 (421 aa).

The tract at residues 25-53 (EGEERPREPPGPAEAQAPAGTEAGGRTSR) is disordered. A compositionally biased stretch (low complexity) spans 37–49 (AEAQAPAGTEAGG). 10 consecutive transmembrane segments (helical) span residues 66-86 (VFWG…STQL), 98-118 (FTLT…YYAG), 149-169 (VFFT…YLYL), 179-199 (DVSV…WIVL), 208-228 (IVAA…DGFH), 232-252 (VIGI…KVLF), 266-286 (LFLS…PVIL), 305-325 (LCGF…GIAV), 326-346 (TYPT…AVVD), and 352-372 (IVFN…FLLL). Residues 394-421 (KEETAESSGDLGTGPQSRSRRARPSFAR) form a disordered region. Residues 411-421 (RSRRARPSFAR) show a composition bias toward basic residues.

The protein belongs to the SLC35F solute transporter family.

It localises to the membrane. The enzyme catalyses thiamine(in) = thiamine(out). Mediates thiamine transport. The polypeptide is Solute carrier family 35 member F3 (Slc35f3) (Mus musculus (Mouse)).